A 244-amino-acid polypeptide reads, in one-letter code: Geranylgeranylglyceryl phosphate synthase (244 aa).

Positions 21 and 50 each coordinate Mg(2+). Residues Y168 to G174, G200 to G201, and G222 to N223 each bind sn-glycerol 1-phosphate.

This sequence belongs to the GGGP/HepGP synthase family. Group II subfamily. Mg(2+) serves as cofactor.

It localises to the cytoplasm. The enzyme catalyses sn-glycerol 1-phosphate + (2E,6E,10E)-geranylgeranyl diphosphate = sn-3-O-(geranylgeranyl)glycerol 1-phosphate + diphosphate. It functions in the pathway membrane lipid metabolism; glycerophospholipid metabolism. Prenyltransferase that catalyzes the transfer of the geranylgeranyl moiety of geranylgeranyl diphosphate (GGPP) to the C3 hydroxyl of sn-glycerol-1-phosphate (G1P). This reaction is the first ether-bond-formation step in the biosynthesis of archaeal membrane lipids. The sequence is that of Geranylgeranylglyceryl phosphate synthase from Sulfurisphaera tokodaii (strain DSM 16993 / JCM 10545 / NBRC 100140 / 7) (Sulfolobus tokodaii).